The chain runs to 196 residues: FMN-dependent NADH:quinone oxidoreductase (196 aa).

An FMN-binding site is contributed by Ser10.

It belongs to the azoreductase type 1 family. As to quaternary structure, homodimer. The cofactor is FMN.

It catalyses the reaction 2 a quinone + NADH + H(+) = 2 a 1,4-benzosemiquinone + NAD(+). The catalysed reaction is N,N-dimethyl-1,4-phenylenediamine + anthranilate + 2 NAD(+) = 2-(4-dimethylaminophenyl)diazenylbenzoate + 2 NADH + 2 H(+). In terms of biological role, quinone reductase that provides resistance to thiol-specific stress caused by electrophilic quinones. Functionally, also exhibits azoreductase activity. Catalyzes the reductive cleavage of the azo bond in aromatic azo compounds to the corresponding amines. This is FMN-dependent NADH:quinone oxidoreductase from Cereibacter sphaeroides (strain ATCC 17029 / ATH 2.4.9) (Rhodobacter sphaeroides).